The sequence spans 102 residues: Protein AC4 (102 aa).

It belongs to the geminiviridae protein AC4/C4 family.

Its function is as follows. Pathogenicity determinant. May act as a suppressor of RNA-mediated gene silencing, also known as post-transcriptional gene silencing (PTGS), a mechanism of plant viral defense that limits the accumulation of viral RNAs. The chain is Protein AC4 from Indian cassava mosaic virus (ICMV).